The chain runs to 491 residues: UDP-N-acetylmuramate--L-alanine ligase (491 aa).

Residue 126 to 132 coordinates ATP; that stretch reads GTHGKTT.

Belongs to the MurCDEF family.

It is found in the cytoplasm. It catalyses the reaction UDP-N-acetyl-alpha-D-muramate + L-alanine + ATP = UDP-N-acetyl-alpha-D-muramoyl-L-alanine + ADP + phosphate + H(+). The protein operates within cell wall biogenesis; peptidoglycan biosynthesis. Cell wall formation. This is UDP-N-acetylmuramate--L-alanine ligase from Salmonella paratyphi A (strain ATCC 9150 / SARB42).